We begin with the raw amino-acid sequence, 383 residues long: Arginine biosynthesis bifunctional protein ArgJ (383 aa).

6 residues coordinate substrate: Thr146, Lys168, Thr179, Glu259, Asn378, and Thr383. The Nucleophile role is filled by Thr179.

Belongs to the ArgJ family. In terms of assembly, heterotetramer of two alpha and two beta chains.

The protein resides in the cytoplasm. It carries out the reaction N(2)-acetyl-L-ornithine + L-glutamate = N-acetyl-L-glutamate + L-ornithine. The enzyme catalyses L-glutamate + acetyl-CoA = N-acetyl-L-glutamate + CoA + H(+). Its pathway is amino-acid biosynthesis; L-arginine biosynthesis; L-ornithine and N-acetyl-L-glutamate from L-glutamate and N(2)-acetyl-L-ornithine (cyclic): step 1/1. It functions in the pathway amino-acid biosynthesis; L-arginine biosynthesis; N(2)-acetyl-L-ornithine from L-glutamate: step 1/4. Functionally, catalyzes two activities which are involved in the cyclic version of arginine biosynthesis: the synthesis of N-acetylglutamate from glutamate and acetyl-CoA as the acetyl donor, and of ornithine by transacetylation between N(2)-acetylornithine and glutamate. The polypeptide is Arginine biosynthesis bifunctional protein ArgJ (Thermobifida fusca (strain YX)).